The sequence spans 573 residues: Protein FAM200A (573 aa).

The tract at residues 1-51 (MTPESRDTTDLSPGGTQEMEGIVIVKVEEEDEEDHFQKERNKVESSPQVLS) is disordered. Residues 1–513 (MTPESRDTTD…DDFPLLSRKS (513 aa)) are Extracellular-facing. The helical transmembrane segment at 514 to 533 (ILLLLPFTTTYLCELGFSIL) threads the bilayer. Residues 534–573 (TRLKTKKRNRLNSAPDMRVALSSCVPDWKELMNRQAHPSH) are Cytoplasmic-facing.

This sequence belongs to the FAM200 family.

It localises to the membrane. The protein is Protein FAM200A (FAM200A) of Homo sapiens (Human).